A 125-amino-acid polypeptide reads, in one-letter code: Small ribosomal subunit protein eS8 (125 aa).

Residues Met-1 to Thr-34 are disordered.

This sequence belongs to the eukaryotic ribosomal protein eS8 family. As to quaternary structure, part of the 30S ribosomal subunit.

This is Small ribosomal subunit protein eS8 from Methanospirillum hungatei JF-1 (strain ATCC 27890 / DSM 864 / NBRC 100397 / JF-1).